The following is a 372-amino-acid chain: Transcription factor MYB80 (372 aa).

2 HTH myb-type domains span residues 9 to 65 (KDNV…RPDL) and 66 to 116 (KHGE…KKKL). 2 consecutive DNA-binding regions (H-T-H motif) follow at residues 37–61 (WRLI…TNYL) and 89–112 (WSVI…NTKL). Over residues 298–311 (MWSHQSLYSGSSGT) the composition is skewed to polar residues. The tract at residues 298 to 347 (MWSHQSLYSGSSGTEEARRELPEKGNDSVGSSGGDDDAADDGKDSGKGAA) is disordered. Over residues 312 to 323 (EEARRELPEKGN) the composition is skewed to basic and acidic residues.

It is found in the nucleus. Functionally, essential for tapetum development in anthers and microsporogenesis. May regulate the timing of tapetal programmed cell death (PCD) which is critical for pollen development. In Oryza sativa subsp. japonica (Rice), this protein is Transcription factor MYB80.